We begin with the raw amino-acid sequence, 130 residues long: MASNFEEFVLVDNGGTGDVKVAPSNFANGVAEWISSNSRSQAYKVTCSVRQSSANNRKYTVKVEVPKVATQVQGGVELPVAAWRSYMNMELTIPVFATNDDCALIVKALQGTFKTGNPIATAIAANSGIY.

The viral RNA-binding stretch occupies residues 32-105 (EWISSNSRSQ…FATNDDCALI (74 aa)).

This sequence belongs to the Leviviricetes capsid protein family. Homodimer. The capsid proteins form dimers that assemble by group of 5. Twelve such pentamers are linked together with free dimers. The homodimers binds to the viral RNA via an operator hairpin, but also to many other RNA sequences in the viral genome; this interaction probably shifts the virus from the replicative to the assembly phase and ensures specific encapsidation of the viral genome.

It is found in the virion. In terms of biological role, capsid protein self-assembles to form an icosahedral capsid with a T=3 symmetry, about 26 nm in diameter, and consisting of 89 capsid proteins dimers (178 capsid proteins). Involved in viral genome encapsidation through the interaction between a capsid protein dimer and the multiple packaging signals present in the RNA genome. The capsid also contains 1 copy of the A2 maturation protein. Its function is as follows. Acts as a translational repressor of viral replicase synthesis late in infection. This latter function is the result of capsid protein interaction with an RNA hairpin which contains the replicase ribosome-binding site. This chain is Capsid protein, found in Enterobacteria phage fr (Bacteriophage fr).